Consider the following 176-residue polypeptide: MFHATTIVAVKKGEKVAIAGDGQVTFSQNMIMKQNAKKVRKVYNGKVLVGFAGSVADAITLCEKFEEKLEQNSGNLQKSVVELAKEWRQDKILRRLEALMIVANSEHLFVVSGSGEVVEPDDNIAAIGSGGPYALAAARALVQNTNLEPAEIAKKALEIAASICIYTNNNITVLEL.

Residue Thr-5 is part of the active site. 3 residues coordinate Na(+): Ala-161, Cys-164, and Thr-167.

This sequence belongs to the peptidase T1B family. HslV subfamily. As to quaternary structure, a double ring-shaped homohexamer of HslV is capped on each side by a ring-shaped HslU homohexamer. The assembly of the HslU/HslV complex is dependent on binding of ATP.

Its subcellular location is the cytoplasm. The catalysed reaction is ATP-dependent cleavage of peptide bonds with broad specificity.. Allosterically activated by HslU binding. Functionally, protease subunit of a proteasome-like degradation complex believed to be a general protein degrading machinery. The protein is ATP-dependent protease subunit HslV of Caldicellulosiruptor saccharolyticus (strain ATCC 43494 / DSM 8903 / Tp8T 6331).